We begin with the raw amino-acid sequence, 256 residues long: Glutamate racemase (256 aa).

Substrate-binding positions include 5 to 6 (DS) and 37 to 38 (YG). The active-site Proton donor/acceptor is C69. 70–71 (NT) is a binding site for substrate. C181 serves as the catalytic Proton donor/acceptor. 182–183 (TH) is a binding site for substrate.

This sequence belongs to the aspartate/glutamate racemases family.

The catalysed reaction is L-glutamate = D-glutamate. It functions in the pathway cell wall biogenesis; peptidoglycan biosynthesis. In terms of biological role, provides the (R)-glutamate required for cell wall biosynthesis. The chain is Glutamate racemase from Buchnera aphidicola subsp. Schizaphis graminum (strain Sg).